The sequence spans 275 residues: Two-component response regulator PprB (275 aa).

Residues 10–128 (SVLIIDDEPQ…ELLHGLERLE (119 aa)) enclose the Response regulatory domain. At Asp60 the chain carries 4-aspartylphosphate. A disordered region spans residues 173–205 (SQPSALRSEDSQPSAPPAPVAESQVSPSNPLFG). One can recognise an HTH luxR-type domain in the interval 200–265 (SNPLFGKLSP…QLALALSPAA (66 aa)). Positions 224 to 243 (NYQIAYELGITENTVKLYVS) form a DNA-binding region, H-T-H motif.

Post-translationally, phosphorylated by PprA.

Member of the two-component regulatory system PprA/PprB involved in biofilm formation by controlling the expression of many related genes including type IVb pili major subunit flp pilin, adhesin bapA or cupE fimbriae. Functions as a transcription regulator by direct binding to promoter regions. Negatively regulates its own transcription. The chain is Two-component response regulator PprB from Pseudomonas aeruginosa (strain ATCC 15692 / DSM 22644 / CIP 104116 / JCM 14847 / LMG 12228 / 1C / PRS 101 / PAO1).